We begin with the raw amino-acid sequence, 205 residues long: Protein TK0174 (205 aa).

In terms of domain architecture, AMMECR1 spans 7 to 201 (EWGEFLVRLA…EEYPRGPVRR (195 aa)).

The chain is Protein TK0174 from Thermococcus kodakarensis (strain ATCC BAA-918 / JCM 12380 / KOD1) (Pyrococcus kodakaraensis (strain KOD1)).